The following is a 495-amino-acid chain: MVAEISKDCVTIAAADQCVDMKEELPAGNYILVGVDVDTTGRRLIDEIVQLAAYTPKDNFQQYIMPYMNLNPAARQRHQIRVISIGFYRMLKSMQTYKIIKSKSEVAALMDFLNWLEMLVAKQPSTDGIVMLYHEERKFIPYMVLEALKKYGLIERFNRTVKSFVNTFNMAKASLGDANLKNCGLRKLSLLLAKSNDESANKENEPENVNRNGSSNDKCHKNGMNQEHDFFEGSANVRAKMVYEVALQLTNSDRTSEPESSEELVNLFNAVKPFAKLVSSDIMELQTQNENMGRQNSFRPVFLNYFRTTLYHRVRAVKFRIVLAENGFTLDSLKAIWTEKRKEGLELALTNIDTLKTEEKTELVELLDSFFDPSKATIKPSFKPNGNGPRRRIRANGAASSKNGAMSSRSTSTEFGAGGDKSQTEGLSAPVPDSTTKSPSPGKTGGRPHRKRNNTRNGFGSAKGPKKAETLNIAAPEPPQSPVAVSTPVAIAATN.

Disordered stretches follow at residues 197-217 and 377-495; these read DESA…SSND and TIKP…AATN. Composition is skewed to polar residues over residues 207–216 and 398–414; these read ENVNRNGSSN and AASS…TSTE.

In terms of biological role, ensures the proper localization of the mRNA of the bicoid gene to the anterior regions of the oocyte thus playing a fundamental role in the establishment of the polarity of the oocyte. May bind the bcd mRNA. In Drosophila pseudoobscura pseudoobscura (Fruit fly), this protein is Maternal protein exuperantia-1 (exu1).